A 309-amino-acid polypeptide reads, in one-letter code: Homoserine kinase (309 aa).

91–101 is a binding site for ATP; sequence PIGSGLGSSAC.

It belongs to the GHMP kinase family. Homoserine kinase subfamily.

The protein resides in the cytoplasm. It carries out the reaction L-homoserine + ATP = O-phospho-L-homoserine + ADP + H(+). The protein operates within amino-acid biosynthesis; L-threonine biosynthesis; L-threonine from L-aspartate: step 4/5. Functionally, catalyzes the ATP-dependent phosphorylation of L-homoserine to L-homoserine phosphate. This chain is Homoserine kinase (thrB), found in Serratia marcescens.